The following is a 275-amino-acid chain: Voltage-dependent calcium channel gamma-5 subunit (275 aa).

4 consecutive transmembrane segments (helical) span residues 8 to 28 (ALTLLSSVFAVCGLGLLGIAV), 103 to 123 (FPLVSLFFMFIGFILSNIGHI), 129 to 149 (ILAFVSGIFFILSGLSLVVGL), and 181 to 201 (FAAISFLLTESAGVMSVYLFM).

This sequence belongs to the PMP-22/EMP/MP20 family. CACNG subfamily. As to quaternary structure, the L-type calcium channel is composed of five subunits: alpha-1, alpha-2/delta, beta and gamma. Acts as an auxiliary subunit for AMPA-selective glutamate receptors (AMPARs). Found in a complex with GRIA1, GRIA2, GRIA3, GRIA4, CNIH2, CNIH3, CACNG2, CACNG3, CACNG4, CACNG7 and CACNG8. Interacts with GRIA1, GRIA2, GRIA3 and GRIA4. As to expression, brain. Enriched in Bergman glia, as well as a variety of neuronal populations including locus coeruleus, olfactory bulb, lateral septal nucleus, interpeduncular nucleus, and the CA2 and rostral/medial CA1 regions of hippocampus.

The protein localises to the membrane. It is found in the postsynaptic density membrane. Functionally, regulates the gating properties of AMPA-selective glutamate receptors (AMPARs). Modulates their gating properties by accelerating their rates of activation, deactivation and desensitization. Displays subunit-specific AMPA receptor regulation. Shows specificity for GRIA1, GRIA4 and the long isoform of GRIA2. Thought to stabilize the calcium channel in an inactivated (closed) state. The protein is Voltage-dependent calcium channel gamma-5 subunit (Cacng5) of Mus musculus (Mouse).